A 149-amino-acid chain; its full sequence is Nucleoside diphosphate kinase (149 aa).

Residues Lys9, Phe57, Arg85, Thr91, Arg102, and Asn112 each coordinate ATP. Catalysis depends on His115, which acts as the Pros-phosphohistidine intermediate.

The protein belongs to the NDK family. Homotetramer. Mg(2+) is required as a cofactor.

It is found in the cytoplasm. The enzyme catalyses a 2'-deoxyribonucleoside 5'-diphosphate + ATP = a 2'-deoxyribonucleoside 5'-triphosphate + ADP. It catalyses the reaction a ribonucleoside 5'-diphosphate + ATP = a ribonucleoside 5'-triphosphate + ADP. Functionally, major role in the synthesis of nucleoside triphosphates other than ATP. The ATP gamma phosphate is transferred to the NDP beta phosphate via a ping-pong mechanism, using a phosphorylated active-site intermediate. The protein is Nucleoside diphosphate kinase of Desulfitobacterium hafniense (strain DSM 10664 / DCB-2).